Consider the following 347-residue polypeptide: Transcription termination/antitermination protein NusA (347 aa).

Residues 112 to 184 form the S1 motif domain; that stretch reads GEIVAGVIQR…REPLITLSRT (73 aa). The KH domain occupies 287 to 347; it reads ARAARVVVPD…GVSRGMAHDR (61 aa). The disordered stretch occupies residues 322–347; that stretch reads DIRGDAPPPPPGQPEPGVSRGMAHDR.

Belongs to the NusA family. Monomer. Binds directly to the core enzyme of the DNA-dependent RNA polymerase and to nascent RNA.

The protein localises to the cytoplasm. In terms of biological role, participates in both transcription termination and antitermination. The protein is Transcription termination/antitermination protein NusA of Mycobacterium bovis (strain ATCC BAA-935 / AF2122/97).